An 86-amino-acid polypeptide reads, in one-letter code: RNA-binding protein Hfq (86 aa).

The Sm domain maps to 9–68 (DPYLNTLRKEKVPVSIYLVNGIKLQGSIESFDQFVVLLKNTVSQMVYKHAISTVVPARPV). A disordered region spans residues 67-86 (PVRLPSPTDGEHGDSEPGNA). Positions 75–86 (DGEHGDSEPGNA) are enriched in basic and acidic residues.

This sequence belongs to the Hfq family. Homohexamer.

Its function is as follows. RNA chaperone that binds small regulatory RNA (sRNAs) and mRNAs to facilitate mRNA translational regulation in response to envelope stress, environmental stress and changes in metabolite concentrations. Also binds with high specificity to tRNAs. The protein is RNA-binding protein Hfq of Pseudomonas putida (strain GB-1).